The chain runs to 91 residues: Putative regulatory protein PTH_1796 (91 aa).

It belongs to the RemA family.

The chain is Putative regulatory protein PTH_1796 from Pelotomaculum thermopropionicum (strain DSM 13744 / JCM 10971 / SI).